The primary structure comprises 588 residues: Arginine--tRNA ligase (588 aa).

A 'HIGH' region motif is present at residues 126-136; it reads PNIAKEMHVGH.

The protein belongs to the class-I aminoacyl-tRNA synthetase family. Monomer.

The protein localises to the cytoplasm. It catalyses the reaction tRNA(Arg) + L-arginine + ATP = L-arginyl-tRNA(Arg) + AMP + diphosphate. The chain is Arginine--tRNA ligase from Nostoc sp. (strain PCC 7120 / SAG 25.82 / UTEX 2576).